A 396-amino-acid polypeptide reads, in one-letter code: Phosphoglycerate kinase (396 aa).

Substrate is bound by residues 21–23 (DLN), R36, 59–62 (HFGR), R118, and R151. ATP contacts are provided by residues K201, E323, and 353–356 (GGDT).

Belongs to the phosphoglycerate kinase family. In terms of assembly, monomer.

It is found in the cytoplasm. The enzyme catalyses (2R)-3-phosphoglycerate + ATP = (2R)-3-phospho-glyceroyl phosphate + ADP. It functions in the pathway carbohydrate degradation; glycolysis; pyruvate from D-glyceraldehyde 3-phosphate: step 2/5. This Brucella melitensis biotype 1 (strain ATCC 23456 / CCUG 17765 / NCTC 10094 / 16M) protein is Phosphoglycerate kinase.